The sequence spans 512 residues: MVAHDAAAGVTGEGAGPPVRRAPARTYQVRTYGCQMNVHDSERLAGLLEAAGYRRATDGSEADVVVFNTCAVRENADNRLYGNLSHLAPRKRANPDMQIAVGGCLAQKDRDAVLRRAPWVDVVFGTHNIGSLPTLLERARHNKVAQVEIAEALQQFPSSLPSSRESAYAAWVSISVGCNNSCTFCIVPSLRGREVDRSPADILAEVRSLVNDGVLEVTLLGQNVNAYGVSFADPALPRNRGAFAELLRACGDIDGLERVRFTSPHPAEFTDDVIEAMAQTRNVCPALHMPLQSGSDRILRAMRRSYRAERYLGIIERVRAAIPHAAITTDLIVGFPGETEEDFAATLDVVRRARFAAAFTFQYSKRPGTPAAQLDGQLPKAVVQERYERLIALQEQISLEANRALVGQAVEVLVATGEGRKDTVTARMSGRARDGRLVHFTAGQPRVRPGDVITTKVTEAAPHHLIADAGVLTHRRTRAGDAHTAGQPGRAVGLGMPGVGLPVSAAKPGGCR.

The disordered stretch occupies residues 1–22 (MVAHDAAAGVTGEGAGPPVRRA). Residues 25 to 141 (RTYQVRTYGC…LPTLLERARH (117 aa)) enclose the MTTase N-terminal domain. [4Fe-4S] cluster contacts are provided by Cys-34, Cys-70, Cys-104, Cys-178, Cys-182, and Cys-185. Positions 164 to 400 (RESAYAAWVS…IALQEQISLE (237 aa)) constitute a Radical SAM core domain. In terms of domain architecture, TRAM spans 403–471 (RALVGQAVEV…PHHLIADAGV (69 aa)).

Belongs to the methylthiotransferase family. MiaB subfamily. As to quaternary structure, monomer. The cofactor is [4Fe-4S] cluster.

Its subcellular location is the cytoplasm. The enzyme catalyses N(6)-dimethylallyladenosine(37) in tRNA + (sulfur carrier)-SH + AH2 + 2 S-adenosyl-L-methionine = 2-methylsulfanyl-N(6)-dimethylallyladenosine(37) in tRNA + (sulfur carrier)-H + 5'-deoxyadenosine + L-methionine + A + S-adenosyl-L-homocysteine + 2 H(+). Its function is as follows. Catalyzes the methylthiolation of N6-(dimethylallyl)adenosine (i(6)A), leading to the formation of 2-methylthio-N6-(dimethylallyl)adenosine (ms(2)i(6)A) at position 37 in tRNAs that read codons beginning with uridine. This chain is tRNA-2-methylthio-N(6)-dimethylallyladenosine synthase, found in Mycobacterium bovis (strain ATCC BAA-935 / AF2122/97).